The following is a 65-amino-acid chain: Alpha-toxin Lqq4 (65 aa).

An LCN-type CS-alpha/beta domain is found at 3 to 65 (RDAYIADDKN…VPIRIPGKCR (63 aa)). Positions 9 to 13 (DDKNC) are specificity module, loop 1. Disulfide bonds link Cys13/Cys64, Cys17/Cys37, Cys23/Cys47, and Cys27/Cys49. Specificity module, loop stretches follow at residues 40–44 (LGKYG) and 57–65 (PIRIPGKCR). Arg65 carries the post-translational modification Arginine amide.

Belongs to the long (4 C-C) scorpion toxin superfamily. Sodium channel inhibitor family. Alpha subfamily. In terms of processing, the recombinant toxin which is used for activity tests is not amidated. However, C-terminal amidation does not appear to play an important role in activity, since the non-amidated recombinant toxin and the native toxin (which is amidated) show similar activities on all sodium channels tested. As to expression, expressed by the venom gland.

It is found in the secreted. Functionally, alpha toxins bind voltage-independently at site-3 of sodium channels (Nav) and inhibit the inactivation of the activated channels, thereby blocking neuronal transmission. Both native and recombinant (non-amidated) toxins inhibit inactivation of Nav1.2/SCN2A (EC(50)=31.2-36.6 nM), Nav1.6/SCN8A (EC(50)=6.9-8.9 nM), and Nav1.7/SCN9A (EC(50)=182.0-260.1 nM). This is Alpha-toxin Lqq4 from Leiurus quinquestriatus quinquestriatus (Egyptian scorpion).